The following is a 206-amino-acid chain: Dephospho-CoA kinase (206 aa).

The DPCK domain occupies 4–204 (VIGLTGGIAS…EGYIESHSED (201 aa)). Residue 12–17 (ASGKST) participates in ATP binding.

The protein belongs to the CoaE family.

It is found in the cytoplasm. The enzyme catalyses 3'-dephospho-CoA + ATP = ADP + CoA + H(+). It functions in the pathway cofactor biosynthesis; coenzyme A biosynthesis; CoA from (R)-pantothenate: step 5/5. In terms of biological role, catalyzes the phosphorylation of the 3'-hydroxyl group of dephosphocoenzyme A to form coenzyme A. The sequence is that of Dephospho-CoA kinase from Staphylococcus saprophyticus subsp. saprophyticus (strain ATCC 15305 / DSM 20229 / NCIMB 8711 / NCTC 7292 / S-41).